The chain runs to 266 residues: Tropinone reductase homolog At1g07440 (266 aa).

L18–H42 contacts NADP(+). S151 provides a ligand contact to substrate. Y164 functions as the Proton acceptor in the catalytic mechanism.

It belongs to the short-chain dehydrogenases/reductases (SDR) family. SDR65C subfamily.

This is Tropinone reductase homolog At1g07440 from Arabidopsis thaliana (Mouse-ear cress).